Reading from the N-terminus, the 202-residue chain is MNALETQGLGMIPMVIEQSGRGERSYDIYSRLLKERVIFLVGPVNDQTANLVVAQLLFLESENPDKDISFYINSPGGSVSAGMAIFDTMNFIKPDVSTLCTGMAASMGAFLLAAGAKGKRFALPNSKVMIHQPLGGMQGQATEIEIHAREILKTREQLNKILAERTGQPLEKIQRDTERDYFLSADESREYGLVDQVIHRRS.

The active-site Nucleophile is the S106. H131 is an active-site residue.

It belongs to the peptidase S14 family. Fourteen ClpP subunits assemble into 2 heptameric rings which stack back to back to give a disk-like structure with a central cavity, resembling the structure of eukaryotic proteasomes.

It localises to the cytoplasm. It carries out the reaction Hydrolysis of proteins to small peptides in the presence of ATP and magnesium. alpha-casein is the usual test substrate. In the absence of ATP, only oligopeptides shorter than five residues are hydrolyzed (such as succinyl-Leu-Tyr-|-NHMec, and Leu-Tyr-Leu-|-Tyr-Trp, in which cleavage of the -Tyr-|-Leu- and -Tyr-|-Trp bonds also occurs).. Its function is as follows. Cleaves peptides in various proteins in a process that requires ATP hydrolysis. Has a chymotrypsin-like activity. Plays a major role in the degradation of misfolded proteins. The sequence is that of ATP-dependent Clp protease proteolytic subunit from Verminephrobacter eiseniae (strain EF01-2).